The following is a 1140-amino-acid chain: Eukaryotic translation initiation factor 3 subunit A (1140 aa).

Positions 319-502 (LQRMAAHVLL…HCIYFGTDLT (184 aa)) constitute a PCI domain. Basic and acidic residues-rich tracts occupy residues 590-624 (NNAR…EERE), 826-903 (RMAQ…RPEG), 925-965 (DRAD…KDNE), 1000-1019 (SRDD…DFRN), 1026-1053 (RGGD…EQQR), and 1061-1087 (DAPR…RDVR). Disordered regions lie at residues 590 to 632 (NNAR…QNEI) and 826 to 1140 (RMAQ…VKRR). Residues 1091–1101 (PKEGGGGGGGN) are compositionally biased toward gly residues. Over residues 1108-1130 (PRDEKPTTKQRDQPQDKENKAGD) the composition is skewed to basic and acidic residues.

The protein belongs to the eIF-3 subunit A family. As to quaternary structure, component of the eukaryotic translation initiation factor 3 (eIF-3) complex. The eIF-3 complex interacts with pix.

It localises to the cytoplasm. Its function is as follows. RNA-binding component of the eukaryotic translation initiation factor 3 (eIF-3) complex, which is involved in protein synthesis of a specialized repertoire of mRNAs and, together with other initiation factors, stimulates binding of mRNA and methionyl-tRNAi to the 40S ribosome. The eIF-3 complex specifically targets and initiates translation of a subset of mRNAs involved in cell proliferation. This chain is Eukaryotic translation initiation factor 3 subunit A, found in Drosophila willistoni (Fruit fly).